Reading from the N-terminus, the 288-residue chain is Pyridoxal kinase PdxY (288 aa).

Substrate-binding positions include S12 and 47-48 (TQ). ATP is bound by residues D114, E151, K184, and 211–214 (RPLL). D225 is a binding site for substrate.

The protein belongs to the pyridoxine kinase family. PdxY subfamily. Homodimer. Mg(2+) serves as cofactor.

It catalyses the reaction pyridoxal + ATP = pyridoxal 5'-phosphate + ADP + H(+). The protein operates within cofactor metabolism; pyridoxal 5'-phosphate salvage; pyridoxal 5'-phosphate from pyridoxal: step 1/1. In terms of biological role, pyridoxal kinase involved in the salvage pathway of pyridoxal 5'-phosphate (PLP). Catalyzes the phosphorylation of pyridoxal to PLP. In Pseudomonas savastanoi pv. phaseolicola (strain 1448A / Race 6) (Pseudomonas syringae pv. phaseolicola (strain 1448A / Race 6)), this protein is Pyridoxal kinase PdxY.